Reading from the N-terminus, the 206-residue chain is Ribosomal RNA large subunit methyltransferase E (206 aa).

Glycine 60, tryptophan 62, aspartate 80, aspartate 96, and aspartate 121 together coordinate S-adenosyl-L-methionine. The active-site Proton acceptor is lysine 161.

This sequence belongs to the class I-like SAM-binding methyltransferase superfamily. RNA methyltransferase RlmE family.

The protein localises to the cytoplasm. The catalysed reaction is uridine(2552) in 23S rRNA + S-adenosyl-L-methionine = 2'-O-methyluridine(2552) in 23S rRNA + S-adenosyl-L-homocysteine + H(+). Its function is as follows. Specifically methylates the uridine in position 2552 of 23S rRNA at the 2'-O position of the ribose in the fully assembled 50S ribosomal subunit. This chain is Ribosomal RNA large subunit methyltransferase E, found in Hydrogenovibrio crunogenus (strain DSM 25203 / XCL-2) (Thiomicrospira crunogena).